We begin with the raw amino-acid sequence, 428 residues long: Methyl-branched lipid omega-hydroxylase (428 aa).

Position 379 (Cys379) interacts with heme.

It belongs to the cytochrome P450 family. The cofactor is heme.

The enzyme catalyses a methyl-branched lipid + O2 + 2 reduced ferredoxin [iron-sulfur] cluster + 2 H(+) = an omega-hydroxy-methyl-branched lipid + H2O + 2 oxidized ferredoxin [iron-sulfur] cluster.. The catalysed reaction is cholest-4-en-3-one + 6 reduced [2Fe-2S]-[ferredoxin] + 3 O2 + 5 H(+) = (25R)-3-oxocholest-4-en-26-oate + 6 oxidized [2Fe-2S]-[ferredoxin] + 4 H2O. The protein operates within lipid metabolism; branched-chain fatty acid metabolism. Primarily hydroxylates the omega-carbon of a number of methyl-branched lipids, including (2E,6E)-farnesol, phytanate, geranylgeraniol, 15-methylpalmitate and (2E,6E)-farnesyl diphosphate. Also catalyzes the sequential oxidation of the terminal methyl of cholest-4-en-3-one into (25R)-26-hydroxycholest-4-en-3-one (alcohol), (25R)-26-oxocholest-4-en-3-one (aldehyde), to finally yield the carboxylic acid (25R)-3-oxocholest-4-en-26-oate. Also able to sequentially oxidize cholesterol itself, not only cholest-4-en-3-one. This chain is Methyl-branched lipid omega-hydroxylase (cyp124), found in Mycobacterium tuberculosis (strain CDC 1551 / Oshkosh).